The chain runs to 525 residues: 2,3-bisphosphoglycerate-independent phosphoglycerate mutase 2 (525 aa).

Residues D14 and S64 each coordinate Mn(2+). The active-site Phosphoserine intermediate is S64. Substrate is bound by residues H125, 155 to 156, R187, R193, 274 to 277, and K347; these read RD and RADR. Residues D414, H418, D455, H456, and H474 each coordinate Mn(2+).

The protein belongs to the BPG-independent phosphoglycerate mutase family. Requires Mn(2+) as cofactor.

The enzyme catalyses (2R)-2-phosphoglycerate = (2R)-3-phosphoglycerate. The protein operates within carbohydrate degradation; glycolysis; pyruvate from D-glyceraldehyde 3-phosphate: step 3/5. Functionally, catalyzes the interconversion of 2-phosphoglycerate and 3-phosphoglycerate. The sequence is that of 2,3-bisphosphoglycerate-independent phosphoglycerate mutase 2 from Methanosarcina barkeri (strain Fusaro / DSM 804).